Here is a 318-residue protein sequence, read N- to C-terminus: 1-aminocyclopropane-1-carboxylate oxidase (318 aa).

In terms of domain architecture, Fe2OG dioxygenase spans P153–P253. The Fe cation site is built by H177, D179, and H234.

It belongs to the iron/ascorbate-dependent oxidoreductase family. Requires Fe cation as cofactor.

The enzyme catalyses 1-aminocyclopropane-1-carboxylate + L-ascorbate + O2 = ethene + L-dehydroascorbate + hydrogen cyanide + CO2 + 2 H2O. Its pathway is alkene biosynthesis; ethylene biosynthesis via S-adenosyl-L-methionine; ethylene from S-adenosyl-L-methionine: step 2/2. This Diospyros kaki (Kaki persimmon) protein is 1-aminocyclopropane-1-carboxylate oxidase (DK-ACO1).